The sequence spans 470 residues: ATP synthase subunit beta (470 aa).

An ATP-binding site is contributed by 155-162; it reads GGAGVGKT.

It belongs to the ATPase alpha/beta chains family. F-type ATPases have 2 components, CF(1) - the catalytic core - and CF(0) - the membrane proton channel. CF(1) has five subunits: alpha(3), beta(3), gamma(1), delta(1), epsilon(1). CF(0) has three main subunits: a(1), b(2) and c(9-12). The alpha and beta chains form an alternating ring which encloses part of the gamma chain. CF(1) is attached to CF(0) by a central stalk formed by the gamma and epsilon chains, while a peripheral stalk is formed by the delta and b chains.

It localises to the cell inner membrane. The catalysed reaction is ATP + H2O + 4 H(+)(in) = ADP + phosphate + 5 H(+)(out). Produces ATP from ADP in the presence of a proton gradient across the membrane. The catalytic sites are hosted primarily by the beta subunits. The polypeptide is ATP synthase subunit beta (Oleidesulfovibrio alaskensis (strain ATCC BAA-1058 / DSM 17464 / G20) (Desulfovibrio alaskensis)).